The chain runs to 420 residues: MVEKRIQPLARDAMAYVLAGGRGSRLKELTDRRAKPAVYFGGKARIIDFALSNALNSGIRRIGVATQYKAHSLIRHMQRGWNFFRPERNESFDILPASQRVSETQWYEGTADAVYQNIDIIEDYGVEYMVILAGDHVYKMDYEWMLQQHVDSGADVTIGCLEVPRMEATGFGVMHVNDKDEILAFVEKPADPPGIPDKPDFALASMGIYVFHTKFLLDALRRDAADPNSSRDFGKDIIPYIVQNGKAVAHRFAKSCVRSDFEHEPYWRDVGTIDAYWQANIDLTAIVPELDIYDKSWPIWTYAEITPPAKFVHDDEDRRGSATSSVVSGDCIISGASLNKSLLFTGVRANSFSKLEGAVILPNVKIGRRAQLKNVVIDHGVVIPEGLVVGEDPELDAKRFRRTESGICLITQPMIDKLDI.

Residues tyrosine 107, glycine 172, 187–188 (EK), and serine 205 each bind alpha-D-glucose 1-phosphate.

Belongs to the bacterial/plant glucose-1-phosphate adenylyltransferase family. As to quaternary structure, homotetramer.

The catalysed reaction is alpha-D-glucose 1-phosphate + ATP + H(+) = ADP-alpha-D-glucose + diphosphate. It participates in glycan biosynthesis; glycogen biosynthesis. Functionally, involved in the biosynthesis of ADP-glucose, a building block required for the elongation reactions to produce glycogen. Catalyzes the reaction between ATP and alpha-D-glucose 1-phosphate (G1P) to produce pyrophosphate and ADP-Glc. This chain is Glucose-1-phosphate adenylyltransferase, found in Rhizobium etli (strain CIAT 652).